A 396-amino-acid chain; its full sequence is L-lactate dehydrogenase (396 aa).

An FMN hydroxy acid dehydrogenase domain is found at Met1–Gly380. Tyr24 provides a ligand contact to substrate. Residues Ser106 and Gln127 each coordinate FMN. Residue Tyr129 participates in substrate binding. Position 155 (Thr155) interacts with FMN. Substrate is bound at residue Arg164. Lys251 provides a ligand contact to FMN. His275 acts as the Proton acceptor in catalysis. Arg278 provides a ligand contact to substrate. Residue Asp306 to Arg330 coordinates FMN.

This sequence belongs to the FMN-dependent alpha-hydroxy acid dehydrogenase family. The cofactor is FMN.

It is found in the cell inner membrane. It carries out the reaction (S)-lactate + A = pyruvate + AH2. Functionally, catalyzes the conversion of L-lactate to pyruvate. Is coupled to the respiratory chain. In Escherichia coli O1:K1 / APEC, this protein is L-lactate dehydrogenase.